Reading from the N-terminus, the 685-residue chain is MTAEPNKPCQIKRDYPQLINLYPATADTDAHYLSKLSIYQQRVFEAHSQQKLLVLGQIGLSNGLELLSWWRAHSHLSQRLLLKVFEPNPINAYELKLLWDQSACLTKEPELEPLAQRLLHAEPAAIIGCQRLIFDDGRFTIDLHFGDIQSQLSSLIHSPMHPVQHWLILPHLLQALHHQSHWQMAKLSDDSATIATIGLSESSGLSETTVNRFQACGFTVSDINELGIHQPVTLINHQPDAVLLHERQVLRQQDAKAYAFNPMAAILSSATQSSIAIIGGGLASAHLALSLAERGQGAQVFCKDAELGQGASGNRQGAIYPLLTPENDELSRFFQQAFLFSRRRVQALTSAPADNQTPISHVFCGVLQTAHDERSQLRLDKIIQGQPWPSEIAYAVDAEQANAIAKINLDKPGFFYPLGGWVCPFEYADAAIQKAMQLADVSVSLNTDILAIERQSDGWVLLTEKERLGPFAQLVLANGAELTQFDASNKLQISPFRGQVSHVPAQFQLSQLATVLCANGYLTPSHQGLHCLGASYVKEPKHLDFCPQEQQENLAKMHESYPKQSWLEDIDMSGNNARVGVRMVTRDHFPMMGCAPDVPKIIKDYAQHQLTKESRHYWQTTPAPVHQGLYILGGLGSRGLSSGPLAAECLAAQLCGEPIPLDKATLCKLNPNRMWLRKLLKGKAL.

A tRNA (mnm(5)s(2)U34)-methyltransferase region spans residues Met1–Gln272. Residues Ile278–Leu685 are FAD-dependent cmnm(5)s(2)U34 oxidoreductase.

This sequence in the N-terminal section; belongs to the methyltransferase superfamily. tRNA (mnm(5)s(2)U34)-methyltransferase family. In the C-terminal section; belongs to the DAO family. FAD is required as a cofactor.

It is found in the cytoplasm. It carries out the reaction 5-aminomethyl-2-thiouridine(34) in tRNA + S-adenosyl-L-methionine = 5-methylaminomethyl-2-thiouridine(34) in tRNA + S-adenosyl-L-homocysteine + H(+). In terms of biological role, catalyzes the last two steps in the biosynthesis of 5-methylaminomethyl-2-thiouridine (mnm(5)s(2)U) at the wobble position (U34) in tRNA. Catalyzes the FAD-dependent demodification of cmnm(5)s(2)U34 to nm(5)s(2)U34, followed by the transfer of a methyl group from S-adenosyl-L-methionine to nm(5)s(2)U34, to form mnm(5)s(2)U34. The chain is tRNA 5-methylaminomethyl-2-thiouridine biosynthesis bifunctional protein MnmC from Shewanella baltica (strain OS185).